A 254-amino-acid chain; its full sequence is Imidazole glycerol phosphate synthase subunit HisF (254 aa).

Active-site residues include aspartate 12 and aspartate 131.

It belongs to the HisA/HisF family. Heterodimer of HisH and HisF.

The protein resides in the cytoplasm. It catalyses the reaction 5-[(5-phospho-1-deoxy-D-ribulos-1-ylimino)methylamino]-1-(5-phospho-beta-D-ribosyl)imidazole-4-carboxamide + L-glutamine = D-erythro-1-(imidazol-4-yl)glycerol 3-phosphate + 5-amino-1-(5-phospho-beta-D-ribosyl)imidazole-4-carboxamide + L-glutamate + H(+). The protein operates within amino-acid biosynthesis; L-histidine biosynthesis; L-histidine from 5-phospho-alpha-D-ribose 1-diphosphate: step 5/9. Its function is as follows. IGPS catalyzes the conversion of PRFAR and glutamine to IGP, AICAR and glutamate. The HisF subunit catalyzes the cyclization activity that produces IGP and AICAR from PRFAR using the ammonia provided by the HisH subunit. The polypeptide is Imidazole glycerol phosphate synthase subunit HisF (Leuconostoc mesenteroides subsp. mesenteroides (strain ATCC 8293 / DSM 20343 / BCRC 11652 / CCM 1803 / JCM 6124 / NCDO 523 / NBRC 100496 / NCIMB 8023 / NCTC 12954 / NRRL B-1118 / 37Y)).